The following is a 519-amino-acid chain: MSVGEVQVIQAWLRSEWHIQVPPAWLDACVNWIKEEADRASIPQSQLNQRVLEQWLLTDLRDLAHPVLPERISEAQKTVLSNRCCVQMDSLLDVSQPAYNQLQRIRGTDCSNDQVSAVTQETQRPWEAKPTRMLMLQLTDGVQNLEGMEYRPIPALNANLPPGTKLQLVGPIAVRLGVLLLKAENIKVLGGEVEQLLEIHSQSRVLCGTLGLPEETHPQQEPDGLVASVADSGYSSLASEASLRHPQSQPLPQISRQDDWDMDEIPDDDFRSIPDHFDDLPQNNNPLEDVPEDFDDIPLDELDNVMCPIDVEVSAGTLEDPERNKHDSSLLNGSKPEEVSFPSRSRLGNTYQSRTLNKVPNTSLASCSTSTLDSSACKETPMYLCSLQAGCWPPKSPQVFRLQAFIVTLVGNLRISGGVWKLGATISDGSGYLDVDLSDNMLSELIGFSAAETRVLRKDLARRGEVDSGIQHCQRELVDMCCMMSVQVDLTGRGVVLSASPISDRECSEMQKRVKEARR.

Polar residues-rich tracts occupy residues 238-255 and 342-353; these read ASEA…PQIS and PSRSRLGNTYQS. Disordered regions lie at residues 238-263 and 314-353; these read ASEA…WDMD and SAGT…TYQS.

It belongs to the RMI1 family. Component of the RMI complex, containing at least TOP3A, RMI1 and RMI2.

The protein resides in the nucleus. Its function is as follows. Essential component of the RMI complex, a complex that plays an important role in the processing of homologous recombination intermediates to limit DNA crossover formation in cells. Promotes TOP3A binding to double Holliday junctions (DHJ) and hence stimulates TOP3A-mediated dissolution. Required for BLM phosphorylation during mitosis. Within the BLM complex, required for BLM and TOP3A stability. The sequence is that of RecQ-mediated genome instability protein 1 (rmi1) from Danio rerio (Zebrafish).